The sequence spans 153 residues: LWWLYRDDLLPKPTKFCGYARSMLTTETLKEQCLPYMKVQPHEQNKYEEFWALNDYVSGRYDGRTSFEVLNQRLEMMENKNKANRIFYLALPPSVFEEVTVNIKQVCMSLCGWNRVIIEKPFGRDDASSQALSDHLAGLFNEDQLYRIDHYLG.

NADP(+)-binding residues include arginine 21 and lysine 120. A D-glucose 6-phosphate-binding site is contributed by lysine 120.

It belongs to the glucose-6-phosphate dehydrogenase family.

It is found in the cytoplasm. Its subcellular location is the cytosol. It catalyses the reaction D-glucose 6-phosphate + NADP(+) = 6-phospho-D-glucono-1,5-lactone + NADPH + H(+). Its pathway is carbohydrate degradation; pentose phosphate pathway; D-ribulose 5-phosphate from D-glucose 6-phosphate (oxidative stage): step 1/3. Cytosolic glucose-6-phosphate dehydrogenase that catalyzes the first and rate-limiting step of the oxidative branch within the pentose phosphate pathway/shunt, an alternative route to glycolysis for the dissimilation of carbohydrates and a major source of reducing power and metabolic intermediates for fatty acid and nucleic acid biosynthetic processes. The sequence is that of Glucose-6-phosphate 1-dehydrogenase (Zw) from Drosophila simulans (Fruit fly).